The primary structure comprises 480 residues: Glutamate--tRNA ligase (480 aa).

The short motif at P21–G31 is the 'HIGH' region element. The span at N122–E146 shows a compositional bias: basic and acidic residues. The segment at N122 to H149 is disordered. The 'KMSKS' region motif lies at K248–R252. Position 251 (K251) interacts with ATP.

This sequence belongs to the class-I aminoacyl-tRNA synthetase family. Glutamate--tRNA ligase type 1 subfamily. In terms of assembly, monomer.

It is found in the cytoplasm. The enzyme catalyses tRNA(Glu) + L-glutamate + ATP = L-glutamyl-tRNA(Glu) + AMP + diphosphate. Functionally, catalyzes the attachment of glutamate to tRNA(Glu) in a two-step reaction: glutamate is first activated by ATP to form Glu-AMP and then transferred to the acceptor end of tRNA(Glu). This is Glutamate--tRNA ligase from Pasteurella multocida (strain Pm70).